The primary structure comprises 143 residues: Large ribosomal subunit protein uL11 (143 aa).

Belongs to the universal ribosomal protein uL11 family. In terms of assembly, part of the ribosomal stalk of the 50S ribosomal subunit. Interacts with L10 and the large rRNA to form the base of the stalk. L10 forms an elongated spine to which L12 dimers bind in a sequential fashion forming a multimeric L10(L12)X complex. One or more lysine residues are methylated.

In terms of biological role, forms part of the ribosomal stalk which helps the ribosome interact with GTP-bound translation factors. The polypeptide is Large ribosomal subunit protein uL11 (Psychrobacter sp. (strain PRwf-1)).